A 548-amino-acid chain; its full sequence is T-complex protein 1 subunit theta (548 aa).

Residue Ala-2 is modified to N-acetylalanine. A Phosphoserine modification is found at Ser-23. Tyr-30 is modified (phosphotyrosine). ADP is bound by residues Tyr-47 and Gly-48. Mg(2+) is bound at residue Asp-99. Positions 100, 101, 102, and 103 each coordinate ADP. ATP is bound by residues Gly-100, Thr-101, and Asn-102. Position 162 is a phosphoserine (Ser-162). ADP-binding residues include Met-169, Ser-170, and Lys-171. 2 residues coordinate ATP: Ser-170 and Lys-171. Ser-213 carries the post-translational modification Phosphoserine. Residues Lys-224, Lys-254, and Lys-260 each participate in a glycyl lysine isopeptide (Lys-Gly) (interchain with G-Cter in SUMO2) cross-link. Ser-269 and Ser-317 each carry phosphoserine. 2 positions are modified to N6-acetyllysine: Lys-318 and Lys-400. Gly-412 lines the ADP pocket. Gly-412 contacts ATP. A Glycyl lysine isopeptide (Lys-Gly) (interchain with G-Cter in SUMO1) cross-link involves residue Lys-459. The residue at position 466 (Lys-466) is an N6-acetyllysine. Asp-499 is a binding site for ADP. Positions 499 and 504 each coordinate ATP. Tyr-505 is subject to Phosphotyrosine. Positions 529-548 (PAGGPKPPSGKKDWDDDQND) are disordered. Lys-534 participates in a covalent cross-link: Glycyl lysine isopeptide (Lys-Gly) (interchain with G-Cter in SUMO2). A Phosphoserine modification is found at Ser-537. A Glycyl lysine isopeptide (Lys-Gly) (interchain with G-Cter in SUMO2) cross-link involves residue Lys-539.

Belongs to the TCP-1 chaperonin family. As to quaternary structure, component of the chaperonin-containing T-complex (TRiC), a hexadecamer composed of two identical back-to-back stacked rings enclosing a protein folding chamber. Each ring is made up of eight different subunits: TCP1/CCT1, CCT2, CCT3, CCT4, CCT5, CCT6A/CCT6, CCT7, CCT8. Interacts with PACRG. Interacts with DNAAF4. Interacts with synaptic plasticity regulator PANTS.

The protein localises to the cytoplasm. The protein resides in the cytoskeleton. It localises to the microtubule organizing center. Its subcellular location is the centrosome. It is found in the cilium basal body. It catalyses the reaction ATP + H2O = ADP + phosphate + H(+). In terms of biological role, component of the chaperonin-containing T-complex (TRiC), a molecular chaperone complex that assists the folding of actin, tubulin and other proteins upon ATP hydrolysis. The TRiC complex mediates the folding of WRAP53/TCAB1, thereby regulating telomere maintenance. As part of the TRiC complex may play a role in the assembly of BBSome, a complex involved in ciliogenesis regulating transports vesicles to the cilia. The chain is T-complex protein 1 subunit theta (CCT8) from Macaca fascicularis (Crab-eating macaque).